Here is a 395-residue protein sequence, read N- to C-terminus: Guanine nucleotide-binding protein subunit beta-5 (395 aa).

7 WD repeats span residues G103–A142, M145–M184, M193–H234, H236–E278, T279–I318, S320–I362, and G365–W394.

This sequence belongs to the WD repeat G protein beta family. As to quaternary structure, component of a complex composed of RGS9 (isoform RGS9-1), GNB5 and RGS9BP; within this complex, the presence of GNB5 stabilizes both itself and RGS9 and increases RGS9 GTPase-activating protein (GAP) activity. Interacts with RGS7, forming the RGS7-GNB5 complex; within this complex, the presence of GNB5 increases RGS7 GTPase-activating protein (GAP) activity. Interacts with GPR158; promotes the GTPase activator activity of the RGS7-GNB5 complex in absence of glycine, in contrast GTPase activator activity of the RGS7-GNB5 complex is inhibited in presence of glycine. Interacts with RGS6. As to expression, isoform 1 is only detected in retina. Isoform 2 is detected in brain (at protein level). Isoform 2 is detected in brain.

The protein resides in the membrane. Enhances GTPase-activating protein (GAP) activity of regulator of G protein signaling (RGS) proteins, such as RGS7 and RGS9, hence involved in the termination of the signaling initiated by the G protein coupled receptors (GPCRs) by accelerating the GTP hydrolysis on the G-alpha subunits, thereby promoting their inactivation. Increases RGS7 GTPase-activating protein (GAP) activity, thereby regulating mood and cognition. Increases RGS9 GTPase-activating protein (GAP) activity, hence contributes to the deactivation of G protein signaling initiated by D(2) dopamine receptors. May play an important role in neuronal signaling, including in the parasympathetic, but not sympathetic, control of heart rate. The polypeptide is Guanine nucleotide-binding protein subunit beta-5 (Gnb5) (Mus musculus (Mouse)).